The sequence spans 318 residues: Methionyl-tRNA formyltransferase (318 aa).

112 to 115 (SILP) serves as a coordination point for (6S)-5,6,7,8-tetrahydrofolate.

Belongs to the Fmt family.

The catalysed reaction is L-methionyl-tRNA(fMet) + (6R)-10-formyltetrahydrofolate = N-formyl-L-methionyl-tRNA(fMet) + (6S)-5,6,7,8-tetrahydrofolate + H(+). In terms of biological role, attaches a formyl group to the free amino group of methionyl-tRNA(fMet). The formyl group appears to play a dual role in the initiator identity of N-formylmethionyl-tRNA by promoting its recognition by IF2 and preventing the misappropriation of this tRNA by the elongation apparatus. This is Methionyl-tRNA formyltransferase from Haemophilus influenzae (strain ATCC 51907 / DSM 11121 / KW20 / Rd).